A 203-amino-acid chain; its full sequence is ATP-dependent Clp protease proteolytic subunit (203 aa).

The Nucleophile role is filled by S107. The active site involves H132.

It belongs to the peptidase S14 family. In terms of assembly, fourteen ClpP subunits assemble into 2 heptameric rings which stack back to back to give a disk-like structure with a central cavity, resembling the structure of eukaryotic proteasomes.

Its subcellular location is the cytoplasm. It catalyses the reaction Hydrolysis of proteins to small peptides in the presence of ATP and magnesium. alpha-casein is the usual test substrate. In the absence of ATP, only oligopeptides shorter than five residues are hydrolyzed (such as succinyl-Leu-Tyr-|-NHMec, and Leu-Tyr-Leu-|-Tyr-Trp, in which cleavage of the -Tyr-|-Leu- and -Tyr-|-Trp bonds also occurs).. In terms of biological role, cleaves peptides in various proteins in a process that requires ATP hydrolysis. Has a chymotrypsin-like activity. Plays a major role in the degradation of misfolded proteins. This chain is ATP-dependent Clp protease proteolytic subunit, found in Shewanella frigidimarina (strain NCIMB 400).